The sequence spans 273 residues: Large ribosomal subunit protein uL2c (273 aa).

This sequence belongs to the universal ribosomal protein uL2 family. As to quaternary structure, part of the 50S ribosomal subunit.

The protein localises to the plastid. It localises to the apicoplast. The sequence is that of Large ribosomal subunit protein uL2c (rpl2) from Eimeria tenella (Coccidian parasite).